The following is a 180-amino-acid chain: Phosphoribosylaminoimidazole carboxylase (180 aa).

S35, D38, S62, K65, G89, and S91 together coordinate substrate.

It belongs to the AIR carboxylase family. Class II subfamily.

The catalysed reaction is 5-amino-1-(5-phospho-D-ribosyl)imidazole-4-carboxylate + H(+) = 5-amino-1-(5-phospho-beta-D-ribosyl)imidazole + CO2. It participates in purine metabolism; IMP biosynthesis via de novo pathway; 5-amino-1-(5-phospho-D-ribosyl)imidazole-4-carboxylate from 5-amino-1-(5-phospho-D-ribosyl)imidazole (carboxylase route): step 1/1. In terms of biological role, catalyzes the reversible conversion of 5-aminoimidazole ribonucleotide (AIR) and CO(2) to 4-carboxy-5-aminoimidazole ribonucleotide (CAIR). The chain is Phosphoribosylaminoimidazole carboxylase from Archaeoglobus fulgidus (strain ATCC 49558 / DSM 4304 / JCM 9628 / NBRC 100126 / VC-16).